A 72-amino-acid polypeptide reads, in one-letter code: Alpha-elapitoxin-Dpp2a (72 aa).

5 disulfides stabilise this stretch: Cys3–Cys21, Cys14–Cys42, Cys27–Cys31, Cys46–Cys57, and Cys58–Cys63.

This sequence belongs to the three-finger toxin family. Long-chain subfamily. Type II alpha-neurotoxin sub-subfamily. In terms of tissue distribution, expressed by the venom gland.

Its subcellular location is the secreted. In terms of biological role, binds with high affinity to muscular (alpha-1/CHRNA1) and neuronal (alpha-7/CHRNA7) nicotinic acetylcholine receptor (nAChR) and inhibits acetylcholine from binding to the receptor, thereby impairing neuromuscular and neuronal transmission. In Dendroaspis polylepis polylepis (Black mamba), this protein is Alpha-elapitoxin-Dpp2a.